Here is a 419-residue protein sequence, read N- to C-terminus: Metacaspase-1A (419 aa).

The disordered stretch occupies residues 1–89 (MHHQQSSYGG…PPDQPVSFGQ (89 aa)). The segment covering 41–51 (NGYNSPQQNYG) has biased composition (polar residues). The span at 59 to 71 (YQQQSAYQNSYNQ) shows a compositional bias: low complexity. Residues His-190 and Cys-246 contribute to the active site.

The protein belongs to the peptidase C14B family.

Its function is as follows. Involved in cell death (apoptosis). In Aspergillus oryzae (strain ATCC 42149 / RIB 40) (Yellow koji mold), this protein is Metacaspase-1A (casA).